A 209-amino-acid chain; its full sequence is Thymidylate kinase (209 aa).

10 to 17 contributes to the ATP binding site; the sequence is GIDGCGKS.

This sequence belongs to the thymidylate kinase family.

It catalyses the reaction dTMP + ATP = dTDP + ADP. In terms of biological role, phosphorylation of dTMP to form dTDP in both de novo and salvage pathways of dTTP synthesis. The sequence is that of Thymidylate kinase from Synechococcus sp. (strain CC9902).